Consider the following 297-residue polypeptide: Phenylalanine-4-hydroxylase (297 aa).

His138, His143, and Glu184 together coordinate Fe cation.

It belongs to the biopterin-dependent aromatic amino acid hydroxylase family. As to quaternary structure, monomer. Fe(2+) serves as cofactor.

The enzyme catalyses (6R)-L-erythro-5,6,7,8-tetrahydrobiopterin + L-phenylalanine + O2 = (4aS,6R)-4a-hydroxy-L-erythro-5,6,7,8-tetrahydrobiopterin + L-tyrosine. The protein operates within amino-acid degradation; L-phenylalanine degradation; acetoacetate and fumarate from L-phenylalanine: step 1/6. The chain is Phenylalanine-4-hydroxylase (phhA) from Chromobacterium violaceum (strain ATCC 12472 / DSM 30191 / JCM 1249 / CCUG 213 / NBRC 12614 / NCIMB 9131 / NCTC 9757 / MK).